Consider the following 508-residue polypeptide: Photosystem II CP47 reaction center protein (508 aa).

6 helical membrane-spanning segments follow: residues 21–36 (AVHI…WAGS), 101–115 (ILFS…IWHW), 140–156 (GIHL…FGAF), 203–218 (IAAG…FHLS), 237–252 (VLSS…AFVV), and 457–472 (SFAL…HGAR).

This sequence belongs to the PsbB/PsbC family. PsbB subfamily. In terms of assembly, PSII is composed of 1 copy each of membrane proteins PsbA, PsbB, PsbC, PsbD, PsbE, PsbF, PsbH, PsbI, PsbJ, PsbK, PsbL, PsbM, PsbT, PsbX, PsbY, PsbZ, Psb30/Ycf12, at least 3 peripheral proteins of the oxygen-evolving complex and a large number of cofactors. It forms dimeric complexes. It depends on Binds multiple chlorophylls. PSII binds additional chlorophylls, carotenoids and specific lipids. as a cofactor.

The protein localises to the plastid. The protein resides in the chloroplast thylakoid membrane. In terms of biological role, one of the components of the core complex of photosystem II (PSII). It binds chlorophyll and helps catalyze the primary light-induced photochemical processes of PSII. PSII is a light-driven water:plastoquinone oxidoreductase, using light energy to abstract electrons from H(2)O, generating O(2) and a proton gradient subsequently used for ATP formation. This chain is Photosystem II CP47 reaction center protein, found in Oenothera biennis (German evening primrose).